We begin with the raw amino-acid sequence, 572 residues long: Serine/threonine-protein kinase pak-1 (572 aa).

Disordered stretches follow at residues 1-71 and 156-195; these read MKAF…SRPS and QPYS…QGVP. Residues 67–80 form the CRIB domain; it reads ISRPSNFEHTIHVG. The tract at residues 81–294 is linker; it reads YDPKTGEFTG…IVSIGNPDRK (214 aa). A compositionally biased stretch (polar residues) spans 178–195; sequence PMTTSTSSAGYNSKQGVP. The Protein kinase domain occupies 295–546; sequence YRKVDKIGSG…ASQLLTHPFL (252 aa). ATP is bound by residues 301–309 and K324; that span reads IGSGASGSV. The Proton acceptor role is filled by D414.

The protein belongs to the protein kinase superfamily. STE Ser/Thr protein kinase family. STE20 subfamily. In terms of assembly, interacts with cdc-42 (GTP-bound form) and cedd-10 (GTP-bound form). Mg(2+) serves as cofactor. It depends on Mn(2+) as a cofactor. Specifically colocalized with cdc-42 and ced-10 at all hypodermal cell boundaries during embryo elongation throughout the second phase of embryogenesis. Expressed mainly in pharyngeal muscles, the CAN neurons, motor neurons in the ventral nerve cord, several cells in the tail region (including the B and Y cells from L1 to adult, the hypodermal blast cell T in the L1 and some of its progeny in later stages), and the distal tip cells.

The protein resides in the cell membrane. It is found in the cytoplasm. It localises to the cell projection. Its subcellular location is the axon. The protein localises to the perikaryon. The enzyme catalyses L-seryl-[protein] + ATP = O-phospho-L-seryl-[protein] + ADP + H(+). It carries out the reaction L-threonyl-[protein] + ATP = O-phospho-L-threonyl-[protein] + ADP + H(+). In terms of biological role, required for hypodermal cell fusion, together with cdc-42 and ced-10, leading to embryonic body elongation, which involves dramatic cytoskeletal reorganization. Plays a redundant role with max-2 in dorsal axonal guidance in ventral cord commissural motoneurons and in P neuroblast migration. Acts probably downstream of Rho GTPases mig-2 and ced-10 to regulate these 2 processes. Involved in orientating axonal growth of HSN neurons. During gonad morphogenesis and probably in association with pix-1 and git-1, involved in the migration of distal tip cell (DTC) and in maintaining their sharp tapering morphology. In addition, plays a redundant role with max-2 in DTC-mediated guidance of gonad elongation. May phosphorylate mlc-4. The sequence is that of Serine/threonine-protein kinase pak-1 (pak-1) from Caenorhabditis elegans.